The sequence spans 311 residues: Uridine phosphorylase 1 (311 aa).

Residues Gly61, Arg95, and 139–142 (RIGT) contribute to the phosphate site. Uridine-binding positions include 143 to 144 (SG) and 218 to 220 (QGR).

The protein belongs to the PNP/UDP phosphorylase family. As to quaternary structure, homodimer. The N-terminus is blocked.

The enzyme catalyses uridine + phosphate = alpha-D-ribose 1-phosphate + uracil. It carries out the reaction 2'-deoxyuridine + phosphate = 2-deoxy-alpha-D-ribose 1-phosphate + uracil. Its pathway is pyrimidine metabolism; UMP biosynthesis via salvage pathway; uracil from uridine (phosphorylase route): step 1/1. Its activity is regulated as follows. Strongly inhibited by 2,2'-anhydro-5-ethyluridine, a competitive inhibitor. Catalyzes the reversible phosphorylytic cleavage of uridine to uracil and ribose-1-phosphate which can then be utilized as carbon and energy sources or in the rescue of pyrimidine bases for nucleotide synthesis. Shows broad substrate specificity and can also accept deoxyuridine and other analogous compounds. In Mus musculus (Mouse), this protein is Uridine phosphorylase 1.